Reading from the N-terminus, the 638-residue chain is Fructose-1,6-bisphosphatase class 3 (638 aa).

It belongs to the FBPase class 3 family. Requires Mn(2+) as cofactor.

The enzyme catalyses beta-D-fructose 1,6-bisphosphate + H2O = beta-D-fructose 6-phosphate + phosphate. Its pathway is carbohydrate biosynthesis; gluconeogenesis. The chain is Fructose-1,6-bisphosphatase class 3 from Pediococcus pentosaceus (strain ATCC 25745 / CCUG 21536 / LMG 10740 / 183-1w).